Consider the following 513-residue polypeptide: Bifunctional purine biosynthesis protein PurH (513 aa).

An MGS-like domain is found at 1-144 (MKRALISVSD…KNYQDVTVVT (144 aa)).

It belongs to the PurH family.

It carries out the reaction (6R)-10-formyltetrahydrofolate + 5-amino-1-(5-phospho-beta-D-ribosyl)imidazole-4-carboxamide = 5-formamido-1-(5-phospho-D-ribosyl)imidazole-4-carboxamide + (6S)-5,6,7,8-tetrahydrofolate. The catalysed reaction is IMP + H2O = 5-formamido-1-(5-phospho-D-ribosyl)imidazole-4-carboxamide. It participates in purine metabolism; IMP biosynthesis via de novo pathway; 5-formamido-1-(5-phospho-D-ribosyl)imidazole-4-carboxamide from 5-amino-1-(5-phospho-D-ribosyl)imidazole-4-carboxamide (10-formyl THF route): step 1/1. The protein operates within purine metabolism; IMP biosynthesis via de novo pathway; IMP from 5-formamido-1-(5-phospho-D-ribosyl)imidazole-4-carboxamide: step 1/1. The chain is Bifunctional purine biosynthesis protein PurH from Lactobacillus acidophilus (strain ATCC 700396 / NCK56 / N2 / NCFM).